Consider the following 493-residue polypeptide: Probable plastidic glucose transporter 2 (493 aa).

The span at 1-14 shows a compositional bias: polar residues; that stretch reads MLGLQRETSSMYKR. Residues 1–24 form a disordered region; it reads MLGLQRETSSMYKRTSSRDYSPMI. The next 12 helical transmembrane spans lie at 52 to 72, 94 to 114, 128 to 148, 151 to 171, 182 to 202, 211 to 231, 293 to 313, 329 to 349, 356 to 376, 392 to 412, 424 to 444, and 450 to 470; these read LPHV…LGVV, LVVS…GGVA, LPMI…VMLL, FLVG…VTEV, SFIQ…GIPV, VCFW…FLCA, VVFI…NAVF, LGNI…MVLM, LLLL…VGAT, GTLV…GLLL, AMAF…LLFL, and LGPR…VMFV.

The protein belongs to the major facilitator superfamily. Sugar transporter (TC 2.A.1.1) family.

It localises to the plastid. Its subcellular location is the chloroplast membrane. Functionally, may be involved in the efflux of glucose towards the cytosol. This is Probable plastidic glucose transporter 2 from Arabidopsis thaliana (Mouse-ear cress).